The primary structure comprises 219 residues: Probable nicotinate-nucleotide adenylyltransferase (219 aa).

This sequence belongs to the NadD family.

The enzyme catalyses nicotinate beta-D-ribonucleotide + ATP + H(+) = deamido-NAD(+) + diphosphate. Its pathway is cofactor biosynthesis; NAD(+) biosynthesis; deamido-NAD(+) from nicotinate D-ribonucleotide: step 1/1. Functionally, catalyzes the reversible adenylation of nicotinate mononucleotide (NaMN) to nicotinic acid adenine dinucleotide (NaAD). The polypeptide is Probable nicotinate-nucleotide adenylyltransferase (Pseudomonas putida (strain W619)).